The primary structure comprises 1142 residues: Melanoma-associated antigen C1 (1142 aa).

The interval 1-132 (MGDKDMPTAG…DVQSPLQNPA (132 aa)) is disordered. Over residues 13 to 42 (SLLQSSSESPQSCPEGEDSQSPLQIPQSSP) the composition is skewed to low complexity. Residue Ser63 is modified to Phosphoserine. Residues 76-87 (SQSPLQIPQSSP) show a composition bias toward low complexity. Over residues 92 to 103 (TQSPLQNSQSSP) the composition is skewed to polar residues. Phosphoserine is present on residues Ser207 and Ser382. Disordered stretches follow at residues 502-778 (TQST…LQRP) and 791-893 (LQSS…SLTD). Residues 614–626 (SPLQGEEFQSSLQ) show a composition bias toward polar residues. Low complexity predominate over residues 627 to 659 (SPVSICSSSTPSSLPQSFPESSQSPPEGPVQSP). Polar residues predominate over residues 671 to 680 (HSQSPLQSPE). Low complexity-rich tracts occupy residues 741-762 (QSPV…FPES) and 807-889 (QSPL…LESD). Residues 908–1106 (LDEKVDELAR…ITFPSSYKDA (199 aa)) form the MAGE domain. Ser1063 is subject to Phosphoserine. The tract at residues 1118 to 1142 (IDTTDDSTATESASSSVMSPSFSSE) is disordered. Residues 1123-1142 (DSTATESASSSVMSPSFSSE) are compositionally biased toward low complexity.

As to expression, expressed in testis and in tumors of a wide variety of histologic types.

The protein localises to the cytoplasm. The polypeptide is Melanoma-associated antigen C1 (MAGEC1) (Homo sapiens (Human)).